Reading from the N-terminus, the 337-residue chain is G-protein coupled receptor 26 (337 aa).

The Extracellular segment spans residues 1 to 10 (MNSWDAGLAG). Residues 11–31 (LLVGTIGVSLLSNGLVLLCLL) form a helical membrane-spanning segment. Topologically, residues 32–47 (HSADIRRQAPALFTLN) are cytoplasmic. A helical membrane pass occupies residues 48–68 (LTCGNLLCTVVNMPLTLAGVV). Residues 69-81 (AQRQPAGDRLCRL) are Extracellular-facing. Cys79 and Cys156 form a disulfide bridge. The helical transmembrane segment at 82-102 (AAFLDTFLAANSMLSMAALSI) threads the bilayer. Residues 103–123 (DRWVAVVFPLSYRAKMRLRDA) are Cytoplasmic-facing. Residues 124–144 (AFMVAYTWLHALTFPATALAL) traverse the membrane as a helical segment. Residues 145-168 (SWLGFHQLYASCTLCSRRPDERLR) lie on the Extracellular side of the membrane. The chain crosses the membrane as a helical span at residues 169–189 (FAVFTSAFHALSFLLSFIVLC). Over 190–245 (FTYLKVLKVARFHCKRIDVITMQTLVLLVDIHPSVRERCLEEQKRRRQRATKKIST) the chain is Cytoplasmic. A helical membrane pass occupies residues 246-266 (FIGTFLVCFAPYVITRLVELF). Topologically, residues 267-276 (STAPIGSHWG) are extracellular. Residues 277-297 (VLSKCLAYSKAASDPFVYSLL) form a helical membrane-spanning segment. Over 298 to 337 (RHQYRRSCKELLNRIFNRRSLHSVGLTGDSHSQNILPVSE) the chain is Cytoplasmic.

This sequence belongs to the G-protein coupled receptor 1 family. As to expression, exclusively expressed in the brain. Prominent expression is detected throughout the entire neocortex at all rostrocaudal and dorsoventral levels. Strong expression is detected in olfactory and auditory sensory areas.

It is found in the cell membrane. In terms of biological role, orphan receptor. Displays a significant level of constitutive activity. Its effect is mediated by G(s)-alpha protein that stimulate adenylate cyclase, resulting in an elevation of intracellular cAMP. In Mus musculus (Mouse), this protein is G-protein coupled receptor 26 (Gpr26).